A 343-amino-acid chain; its full sequence is Probable dual-specificity RNA methyltransferase RlmN (343 aa).

Glu-92 acts as the Proton acceptor in catalysis. Residues 98–328 (YHHGLTACIS…TTVRREMGAD (231 aa)) form the Radical SAM core domain. Residues Cys-105 and Cys-333 are joined by a disulfide bond. [4Fe-4S] cluster-binding residues include Cys-112, Cys-116, and Cys-119. S-adenosyl-L-methionine contacts are provided by residues 159–160 (GE), Ser-191, 214–216 (SLH), and Asn-290. Cys-333 acts as the S-methylcysteine intermediate in catalysis.

The protein belongs to the radical SAM superfamily. RlmN family. It depends on [4Fe-4S] cluster as a cofactor.

It localises to the cytoplasm. It catalyses the reaction adenosine(2503) in 23S rRNA + 2 reduced [2Fe-2S]-[ferredoxin] + 2 S-adenosyl-L-methionine = 2-methyladenosine(2503) in 23S rRNA + 5'-deoxyadenosine + L-methionine + 2 oxidized [2Fe-2S]-[ferredoxin] + S-adenosyl-L-homocysteine. It carries out the reaction adenosine(37) in tRNA + 2 reduced [2Fe-2S]-[ferredoxin] + 2 S-adenosyl-L-methionine = 2-methyladenosine(37) in tRNA + 5'-deoxyadenosine + L-methionine + 2 oxidized [2Fe-2S]-[ferredoxin] + S-adenosyl-L-homocysteine. Functionally, specifically methylates position 2 of adenine 2503 in 23S rRNA and position 2 of adenine 37 in tRNAs. This is Probable dual-specificity RNA methyltransferase RlmN from Alkaliphilus oremlandii (strain OhILAs) (Clostridium oremlandii (strain OhILAs)).